The chain runs to 265 residues: tRNA pseudouridine synthase A (265 aa).

The active-site Nucleophile is the Asp-55. Tyr-113 contacts substrate.

It belongs to the tRNA pseudouridine synthase TruA family. Homodimer.

The catalysed reaction is uridine(38/39/40) in tRNA = pseudouridine(38/39/40) in tRNA. Its function is as follows. Formation of pseudouridine at positions 38, 39 and 40 in the anticodon stem and loop of transfer RNAs. This Levilactobacillus brevis (strain ATCC 367 / BCRC 12310 / CIP 105137 / JCM 1170 / LMG 11437 / NCIMB 947 / NCTC 947) (Lactobacillus brevis) protein is tRNA pseudouridine synthase A.